Here is an 827-residue protein sequence, read N- to C-terminus: Lon protease 2 (827 aa).

The tract at residues 1 to 22 (MSDEKKKGSAASAMPTAMAPPG) is disordered. Residues 9-21 (SAASAMPTAMAPP) are compositionally biased toward low complexity. Residues 33 to 227 (LPILPLRNSV…LVLELLNRKR (195 aa)) form the Lon N-terminal domain. An ATP-binding site is contributed by 379 to 386 (GPPGVGKT). The Lon proteolytic domain occupies 615–796 (TEVPGVATGL…DDVLKAALET (182 aa)). Active-site residues include serine 702 and lysine 745. The interval 799-827 (VGVAGTPGGEPGKEAPLPKPAESAPEVRA) is disordered.

The protein belongs to the peptidase S16 family. As to quaternary structure, homohexamer. Organized in a ring with a central cavity.

The protein resides in the cytoplasm. It carries out the reaction Hydrolysis of proteins in presence of ATP.. ATP-dependent serine protease that mediates the selective degradation of mutant and abnormal proteins as well as certain short-lived regulatory proteins. Required for cellular homeostasis and for survival from DNA damage and developmental changes induced by stress. Degrades polypeptides processively to yield small peptide fragments that are 5 to 10 amino acids long. Binds to DNA in a double-stranded, site-specific manner. The polypeptide is Lon protease 2 (Myxococcus xanthus).